The chain runs to 585 residues: Arginine--tRNA ligase (585 aa).

The 'HIGH' region motif lies at 131–141; that stretch reads ANPTGPMHVGH.

Belongs to the class-I aminoacyl-tRNA synthetase family. Monomer.

The protein localises to the cytoplasm. It catalyses the reaction tRNA(Arg) + L-arginine + ATP = L-arginyl-tRNA(Arg) + AMP + diphosphate. The sequence is that of Arginine--tRNA ligase from Bartonella quintana (strain Toulouse) (Rochalimaea quintana).